The following is a 150-amino-acid chain: Nucleoside diphosphate kinase (150 aa).

Positions 9, 57, 85, 91, 102, and 112 each coordinate ATP. The Pros-phosphohistidine intermediate role is filled by His-115.

It belongs to the NDK family. Mg(2+) is required as a cofactor.

It localises to the cytoplasm. The catalysed reaction is a 2'-deoxyribonucleoside 5'-diphosphate + ATP = a 2'-deoxyribonucleoside 5'-triphosphate + ADP. It carries out the reaction a ribonucleoside 5'-diphosphate + ATP = a ribonucleoside 5'-triphosphate + ADP. In terms of biological role, major role in the synthesis of nucleoside triphosphates other than ATP. The ATP gamma phosphate is transferred to the NDP beta phosphate via a ping-pong mechanism, using a phosphorylated active-site intermediate. The sequence is that of Nucleoside diphosphate kinase from Methanothermobacter thermautotrophicus (strain ATCC 29096 / DSM 1053 / JCM 10044 / NBRC 100330 / Delta H) (Methanobacterium thermoautotrophicum).